A 263-amino-acid polypeptide reads, in one-letter code: Receptor-transporting protein 1 (263 aa).

The Cytoplasmic segment spans residues 1–238 (MRIFRPWRLR…QTGSGWNFCS (238 aa)). Residues 88–197 (ASGRFHCSWC…GEFCEACQEG (110 aa)) form a 3CxxC-type zinc finger. The helical transmembrane segment at 239 to 259 (IPWCLFWATVLLLIIYLQFSF) threads the bilayer. Over 260–263 (RSSV) the chain is Extracellular.

Belongs to the TMEM7 family. As to quaternary structure, interacts with olfactory receptors. As to expression, expressed in testis.

Its subcellular location is the cell membrane. Specifically promotes functional cell surface expression of olfactory receptors, but not of other GPCRs. The polypeptide is Receptor-transporting protein 1 (RTP1) (Homo sapiens (Human)).